The sequence spans 457 residues: uncharacterized protein (457 aa).

Positions 6–64 (PVHKGEVLDVTIMDLTYQGMGVAKVDNYPIFIENALPEEKITVKVTKTTKNFAFGDVEK) constitute a TRAM domain. Residues glutamine 287, tyrosine 316, glutamate 337, and aspartate 385 each coordinate S-adenosyl-L-methionine. The Nucleophile role is filled by cysteine 412.

The protein belongs to the class I-like SAM-binding methyltransferase superfamily. RNA M5U methyltransferase family.

This is an uncharacterized protein from Lactiplantibacillus plantarum (strain ATCC BAA-793 / NCIMB 8826 / WCFS1) (Lactobacillus plantarum).